Consider the following 277-residue polypeptide: Outer kinetochore KNL1 complex subunit ZWINT (277 aa).

Residues 80–155 form an interaction with NDC80 and ZW10 region; the sequence is ASEDTSRQKA…MEKRRAVQNQ (76 aa). Residues 104–217 adopt a coiled-coil conformation; that stretch reads REHVEAIKIG…RYQTFLQLLY (114 aa). The disordered stretch occupies residues 228–277; it reads AEAEAENLPDDKPQQPTRPQEQSTGDTMGRDPGVSFKAVGLQPAGDVNLP. Positions 241 to 253 are enriched in polar residues; it reads QQPTRPQEQSTGD.

As to quaternary structure, component of the KNL1 complex composed of KNL1 and ZWINT. Part of the ten-subunit outer kinetochore KMN network that includes the KNL1, MIS12 and NDC80 complexes; a bioriented kinetochore contains approximately 150 copies of the network. Interacts with the MIS12 complex subunits MIS12 DSN1, and PMF1. Interacts with the NDC80 complex subunit NDC80 during mitosis. Interacts with ZW10. Interacts with CETN3.

Its subcellular location is the nucleus. The protein localises to the chromosome. It localises to the centromere. It is found in the kinetochore. In terms of biological role, acts as a component of the outer kinetochore KNL1 complex that serves as a docking point for spindle assembly checkpoint components and mediates microtubule-kinetochore interactions. Kinetochores, consisting of a centromere-associated inner segment and a microtubule-contacting outer segment, play a crucial role in chromosome segregation by mediating the physical connection between centromeric DNA and spindle microtubules. The outer kinetochore is made up of the ten-subunit KMN network, comprising the MIS12, NDC80 and KNL1 complexes, and auxiliary microtubule-associated components; together they connect the outer kinetochore with the inner kinetochore, bind microtubules, and mediate interactions with mitotic checkpoint proteins that delay anaphase until chromosomes are bioriented on the spindle. Targets the RZZ complex to the kinetochore at prometaphase. Recruits MAD2L1 to the kinetochore, but is not required for BUB1B localization. In addition to orienting mitotic chromosomes, it is also essential for alignment of homologous chromosomes during meiotic metaphase I. In meiosis I, required to activate the spindle assembly checkpoint at unattached kinetochores to correct erroneous kinetochore-microtubule attachments. The protein is Outer kinetochore KNL1 complex subunit ZWINT (ZWINT) of Homo sapiens (Human).